A 107-amino-acid polypeptide reads, in one-letter code: U1-lycotoxin-Ls1h (107 aa).

The signal sequence occupies residues 1–20 (MMKVLVVVALLVTLISYSSS). Positions 21–41 (EGIDDLEADELLSLMANEQTR) are excised as a propeptide. Disulfide bonds link Cys-44–Cys-59, Cys-51–Cys-68, and Cys-70–Cys-84.

Belongs to the neurotoxin 19 (CSTX) family. 04 (U1-Lctx) subfamily. Expressed by the venom gland.

It is found in the secreted. The protein is U1-lycotoxin-Ls1h of Lycosa singoriensis (Wolf spider).